A 164-amino-acid polypeptide reads, in one-letter code: Crossover junction endodeoxyribonuclease RuvC (164 aa).

Catalysis depends on residues D7, E67, and D140. Mg(2+)-binding residues include D7, E67, and D140.

The protein belongs to the RuvC family. In terms of assembly, homodimer which binds Holliday junction (HJ) DNA. The HJ becomes 2-fold symmetrical on binding to RuvC with unstacked arms; it has a different conformation from HJ DNA in complex with RuvA. In the full resolvosome a probable DNA-RuvA(4)-RuvB(12)-RuvC(2) complex forms which resolves the HJ. The cofactor is Mg(2+).

It localises to the cytoplasm. The enzyme catalyses Endonucleolytic cleavage at a junction such as a reciprocal single-stranded crossover between two homologous DNA duplexes (Holliday junction).. The RuvA-RuvB-RuvC complex processes Holliday junction (HJ) DNA during genetic recombination and DNA repair. Endonuclease that resolves HJ intermediates. Cleaves cruciform DNA by making single-stranded nicks across the HJ at symmetrical positions within the homologous arms, yielding a 5'-phosphate and a 3'-hydroxyl group; requires a central core of homology in the junction. The consensus cleavage sequence is 5'-(A/T)TT(C/G)-3'. Cleavage occurs on the 3'-side of the TT dinucleotide at the point of strand exchange. HJ branch migration catalyzed by RuvA-RuvB allows RuvC to scan DNA until it finds its consensus sequence, where it cleaves and resolves the cruciform DNA. The sequence is that of Crossover junction endodeoxyribonuclease RuvC from Finegoldia magna (strain ATCC 29328 / DSM 20472 / WAL 2508) (Peptostreptococcus magnus).